Reading from the N-terminus, the 273-residue chain is 4-hydroxy-tetrahydrodipicolinate reductase (273 aa).

NAD(+) is bound at residue 12 to 17; that stretch reads GAAGRM. R39 provides a ligand contact to NADP(+). NAD(+)-binding positions include 102–104 and 126–129; these read GTT and AANF. H159 functions as the Proton donor/acceptor in the catalytic mechanism. H160 lines the (S)-2,3,4,5-tetrahydrodipicolinate pocket. K163 functions as the Proton donor in the catalytic mechanism. Position 169–170 (169–170) interacts with (S)-2,3,4,5-tetrahydrodipicolinate; it reads GT.

It belongs to the DapB family. Homotetramer.

It localises to the cytoplasm. The catalysed reaction is (S)-2,3,4,5-tetrahydrodipicolinate + NAD(+) + H2O = (2S,4S)-4-hydroxy-2,3,4,5-tetrahydrodipicolinate + NADH + H(+). The enzyme catalyses (S)-2,3,4,5-tetrahydrodipicolinate + NADP(+) + H2O = (2S,4S)-4-hydroxy-2,3,4,5-tetrahydrodipicolinate + NADPH + H(+). It functions in the pathway amino-acid biosynthesis; L-lysine biosynthesis via DAP pathway; (S)-tetrahydrodipicolinate from L-aspartate: step 4/4. Catalyzes the conversion of 4-hydroxy-tetrahydrodipicolinate (HTPA) to tetrahydrodipicolinate. This chain is 4-hydroxy-tetrahydrodipicolinate reductase, found in Erwinia tasmaniensis (strain DSM 17950 / CFBP 7177 / CIP 109463 / NCPPB 4357 / Et1/99).